Here is a 325-residue protein sequence, read N- to C-terminus: MAKAVDKKFCWEIKNFSSLNSERCHSVPVVIGDCKWRLVAFPKGYKADYLSLYLEVADFKSLPSGWRRYVKFRACIVNQLSQELSVQQETQRWFDQNAPGWGFENMLLLTELNAKDGGFLVNGQVMIVAEVEFLEVIGTLDESEEIIKSSDLINKTQEVAQQVKEIIQPNDLINKTQEVAQQVKESIDVNGFQVLPSQVESVRRIFKKHPDIAVGFQVKNQHLRKTFMNFLVNVIETMCQSLQELSNEDLVEVDIALTYLKDAGFKVDWLEKKLDHVKEKKEKEQSGLIILQGIEQQLHELMHKCEKKKSEVLSVGAPLKFDDVV.

The region spanning 6–131 (DKKFCWEIKN…NGQVMIVAEV (126 aa)) is the MATH domain. Residues 266–315 (KVDWLEKKLDHVKEKKEKEQSGLIILQGIEQQLHELMHKCEKKKSEVLSV) adopt a coiled-coil conformation.

The protein is MATH domain and coiled-coil domain-containing protein At3g58340 of Arabidopsis thaliana (Mouse-ear cress).